Reading from the N-terminus, the 147-residue chain is Large ribosomal subunit protein uL15 (147 aa).

The tract at residues M1–L57 is disordered. Over residues T30–G44 the composition is skewed to basic residues.

It belongs to the universal ribosomal protein uL15 family. In terms of assembly, part of the 50S ribosomal subunit.

Its function is as follows. Binds to the 23S rRNA. This chain is Large ribosomal subunit protein uL15, found in Thermotoga neapolitana (strain ATCC 49049 / DSM 4359 / NBRC 107923 / NS-E).